Reading from the N-terminus, the 328-residue chain is Endo-beta-1,4-glucanase B (328 aa).

Residues 1-17 form the signal peptide; that stretch reads MKVNTLLVAVAAGTAMA. N-linked (GlcNAc...) asparagine glycosylation is present at asparagine 95. Catalysis depends on glutamate 155, which acts as the Proton donor. Glutamate 262 acts as the Nucleophile in catalysis.

The protein belongs to the glycosyl hydrolase 5 (cellulase A) family.

Its subcellular location is the secreted. It carries out the reaction Endohydrolysis of (1-&gt;4)-beta-D-glucosidic linkages in cellulose, lichenin and cereal beta-D-glucans.. Functionally, has endoglucanase activity on substrates containing beta-1,4 glycosidic bonds, like in carboxymethylcellulose (CMC), hydroxyethylcellulose (HEC) and beta-glucan. Involved in the degradation of complex natural cellulosic substrates. The polypeptide is Endo-beta-1,4-glucanase B (eglB) (Emericella nidulans (strain FGSC A4 / ATCC 38163 / CBS 112.46 / NRRL 194 / M139) (Aspergillus nidulans)).